The chain runs to 160 residues: 6,7-dimethyl-8-ribityllumazine synthase (160 aa).

Residues Phe22, 57-59 (TYE), and 81-83 (TII) contribute to the 5-amino-6-(D-ribitylamino)uracil site. (2S)-2-hydroxy-3-oxobutyl phosphate is bound at residue 86-87 (QT). His89 serves as the catalytic Proton donor. Leu114 lines the 5-amino-6-(D-ribitylamino)uracil pocket. Residue Arg128 participates in (2S)-2-hydroxy-3-oxobutyl phosphate binding.

Belongs to the DMRL synthase family. In terms of assembly, forms an icosahedral capsid composed of 60 subunits, arranged as a dodecamer of pentamers.

The catalysed reaction is (2S)-2-hydroxy-3-oxobutyl phosphate + 5-amino-6-(D-ribitylamino)uracil = 6,7-dimethyl-8-(1-D-ribityl)lumazine + phosphate + 2 H2O + H(+). Its pathway is cofactor biosynthesis; riboflavin biosynthesis; riboflavin from 2-hydroxy-3-oxobutyl phosphate and 5-amino-6-(D-ribitylamino)uracil: step 1/2. In terms of biological role, catalyzes the formation of 6,7-dimethyl-8-ribityllumazine by condensation of 5-amino-6-(D-ribitylamino)uracil with 3,4-dihydroxy-2-butanone 4-phosphate. This is the penultimate step in the biosynthesis of riboflavin. The sequence is that of 6,7-dimethyl-8-ribityllumazine synthase from Buchnera aphidicola subsp. Acyrthosiphon pisum (strain APS) (Acyrthosiphon pisum symbiotic bacterium).